A 443-amino-acid chain; its full sequence is RILP-like protein homolog (443 aa).

Residues 8–96 enclose the RH1 domain; it reads EMGEMVLDAI…ESEKLEKAEF (89 aa). A coiled-coil region spans residues 59–315; the sequence is LELLEALATK…TLNEQLAELK (257 aa). One can recognise an RH2 domain in the interval 282-401; sequence RPRYTTRELK…KSSESGIRKF (120 aa). The interval 311-394 is disordered; sequence LAELKPPSQA…PDDAPWKKSS (84 aa). Positions 332-355 are enriched in acidic residues; that stretch reads DDSDEDDDGHVADNDDDDDEEEAA. A compositionally biased stretch (low complexity) spans 356-368; sequence AEANELEPPAAGE.

It belongs to the RILPL family. Interacts with Arl8 (in GTP-bound form).

Its subcellular location is the lysosome membrane. May have a role in lysosome distribution by interacting with Arl8. This is RILP-like protein homolog from Drosophila melanogaster (Fruit fly).